Reading from the N-terminus, the 348-residue chain is CCN family member 2 (348 aa).

The signal sequence occupies residues 1–25; it reads MLASVAGPISLALVLLALCTRPAMG. The IGFBP N-terminal domain maps to 26 to 97; that stretch reads QDCSAQCQCA…NRKIGVCTAK (72 aa). Disulfide bonds link cysteine 28–cysteine 53, cysteine 32–cysteine 55, cysteine 34–cysteine 56, cysteine 42–cysteine 59, cysteine 67–cysteine 81, and cysteine 73–cysteine 94. In terms of domain architecture, VWFC spans 100 to 166; sequence APCVFGGSVY…GKCCEEWVCD (67 aa). In terms of domain architecture, TSP type-1 spans 197–242; sequence NCLVQTTEWSACSKTCGMGISTRVTNDNTFCRLEKQSRLCMVRPCE. The heparin-binding stretch occupies residues 246-348; the sequence is EENIKKGKKC…YYRKMYGDMA (103 aa). Intrachain disulfides connect cysteine 255–cysteine 292, cysteine 272–cysteine 306, cysteine 283–cysteine 322, cysteine 286–cysteine 324, and cysteine 291–cysteine 328. The 75-residue stretch at 255 to 329 folds into the CTCK domain; the sequence is CIRTPKIAKP…KTCACHYNCP (75 aa).

This sequence belongs to the CCN family. In terms of assembly, monomer. Interacts with TSKU. As to expression, testis, spleen, kidney, lung, heart, and brain (lowest level in testis and highest in lung).

It is found in the secreted. Its subcellular location is the extracellular space. The protein localises to the extracellular matrix. Functionally, major connective tissue mitoattractant secreted by vascular endothelial cells. Promotes proliferation and differentiation of chondrocytes. Is involved in the stimulation of osteoblast differentiation and has a critical role in osteogenesis. Mediates heparin- and divalent cation-dependent cell adhesion in many cell types including fibroblasts, myofibroblasts, endothelial and epithelial cells. Enhances fibroblast growth factor-induced DNA synthesis. The polypeptide is CCN family member 2 (Mus musculus (Mouse)).